The chain runs to 200 residues: Putative HMP/thiamine-binding protein YkoF (200 aa).

L17 and T49 together coordinate thiamine.

As to quaternary structure, homodimer in vitro. In vivo, may be a part of an ABC transporter complex which is composed of two ATP-binding proteins (YkoD), two transmembrane proteins (YkoC and YkoE) and a solute-binding protein (YkoF).

Functionally, part of the ABC transporter complex YkoCDEF that could transport hydroxymethylpyrimidine (HMP) and/or thiamine. Could also transport other HMP-containing products. Binds thiamine via its HMP moiety. This is Putative HMP/thiamine-binding protein YkoF (ykoF) from Bacillus subtilis (strain 168).